Reading from the N-terminus, the 235-residue chain is Octanoyltransferase (235 aa).

One can recognise a BPL/LPL catalytic domain in the interval 30–214 (NELEDTLLLL…YFGKVFGAKF (185 aa)). Substrate is bound by residues 75-82 (RGGDVTYH), 144-146 (AIG), and 157-159 (GFA). The active-site Acyl-thioester intermediate is Cys-175.

The protein belongs to the LipB family.

The protein resides in the cytoplasm. It catalyses the reaction octanoyl-[ACP] + L-lysyl-[protein] = N(6)-octanoyl-L-lysyl-[protein] + holo-[ACP] + H(+). It functions in the pathway protein modification; protein lipoylation via endogenous pathway; protein N(6)-(lipoyl)lysine from octanoyl-[acyl-carrier-protein]: step 1/2. Its function is as follows. Catalyzes the transfer of endogenously produced octanoic acid from octanoyl-acyl-carrier-protein onto the lipoyl domains of lipoate-dependent enzymes. Lipoyl-ACP can also act as a substrate although octanoyl-ACP is likely to be the physiological substrate. In Caldicellulosiruptor saccharolyticus (strain ATCC 43494 / DSM 8903 / Tp8T 6331), this protein is Octanoyltransferase.